Here is a 207-residue protein sequence, read N- to C-terminus: Thiamine-phosphate synthase (207 aa).

4-amino-2-methyl-5-(diphosphooxymethyl)pyrimidine-binding positions include 36–40 (QLRMK) and asparagine 68. Mg(2+) contacts are provided by aspartate 69 and aspartate 88. Serine 106 is a binding site for 4-amino-2-methyl-5-(diphosphooxymethyl)pyrimidine. 132-134 (TNT) contacts 2-[(2R,5Z)-2-carboxy-4-methylthiazol-5(2H)-ylidene]ethyl phosphate. Lysine 135 is a binding site for 4-amino-2-methyl-5-(diphosphooxymethyl)pyrimidine. 2-[(2R,5Z)-2-carboxy-4-methylthiazol-5(2H)-ylidene]ethyl phosphate contacts are provided by residues glycine 162 and 182–183 (VS).

This sequence belongs to the thiamine-phosphate synthase family. Mg(2+) serves as cofactor.

The enzyme catalyses 2-[(2R,5Z)-2-carboxy-4-methylthiazol-5(2H)-ylidene]ethyl phosphate + 4-amino-2-methyl-5-(diphosphooxymethyl)pyrimidine + 2 H(+) = thiamine phosphate + CO2 + diphosphate. It carries out the reaction 2-(2-carboxy-4-methylthiazol-5-yl)ethyl phosphate + 4-amino-2-methyl-5-(diphosphooxymethyl)pyrimidine + 2 H(+) = thiamine phosphate + CO2 + diphosphate. The catalysed reaction is 4-methyl-5-(2-phosphooxyethyl)-thiazole + 4-amino-2-methyl-5-(diphosphooxymethyl)pyrimidine + H(+) = thiamine phosphate + diphosphate. Its pathway is cofactor biosynthesis; thiamine diphosphate biosynthesis; thiamine phosphate from 4-amino-2-methyl-5-diphosphomethylpyrimidine and 4-methyl-5-(2-phosphoethyl)-thiazole: step 1/1. In terms of biological role, condenses 4-methyl-5-(beta-hydroxyethyl)thiazole monophosphate (THZ-P) and 2-methyl-4-amino-5-hydroxymethyl pyrimidine pyrophosphate (HMP-PP) to form thiamine monophosphate (TMP). This Methanococcus maripaludis (strain C5 / ATCC BAA-1333) protein is Thiamine-phosphate synthase.